Here is a 533-residue protein sequence, read N- to C-terminus: Protein transport protein SEC9 (533 aa).

Disordered stretches follow at residues 1–32, 68–184, 200–246, and 259–284; these read MGFK…IATK, RPGA…MNAT, MAQD…KRAP, and PTNE…GQAP. Positions 11-24 are enriched in basic and acidic residues; that stretch reads PPEEDTPERNRDLL. Residues 92–102 are compositionally biased toward polar residues; that stretch reads GNTSRVGQPQQ. A compositionally biased stretch (gly residues) spans 157 to 172; it reads GGPGNPYGGSTAGAGT. Low complexity predominate over residues 227–240; sequence RPQAAAETPRPQAA. 2 t-SNARE coiled-coil homology domains span residues 318-380 and 470-532; these read RFTK…VAEL and DEME…LTNI.

This sequence belongs to the SNAP-25 family.

In Eremothecium gossypii (strain ATCC 10895 / CBS 109.51 / FGSC 9923 / NRRL Y-1056) (Yeast), this protein is Protein transport protein SEC9 (SEC9).